The following is a 522-amino-acid chain: 4-chlorobenzoate--CoA ligase (522 aa).

ATP contacts are provided by residues 161–169, 300–305, and Asn-410; these read TSGTTGLPK and DIYGTT.

This sequence belongs to the ATP-dependent AMP-binding enzyme family. As to quaternary structure, homodimer. Mg(2+) is required as a cofactor.

It carries out the reaction 4-chlorobenzoate + ATP + CoA = 4-chlorobenzoyl-CoA + AMP + diphosphate. It participates in xenobiotic degradation; 4-chlorobenzoate degradation; 4-hydroxybenzoate from 4-chlorobenzoate: step 2/3. In terms of biological role, catalyzes the formation of chlorobenzoyl-CoA via a 2 step reaction. First 4-chlorobenzoate is adenylated by ATP, followed by acyl transfer from the 4-chlorobenzoyl-AMP intermediate to CoA. Benzoate, 4-bromobenzoate, 4-iodobenzoate and 4-fluorobenzoate also act as substrates. Inactive towards 4-nitrobenzoate. This chain is 4-chlorobenzoate--CoA ligase, found in Arthrobacter sp.